We begin with the raw amino-acid sequence, 163 residues long: Peptidyl-prolyl cis-trans isomerase (163 aa).

Residues 17–163 form the PPIase cyclophilin-type domain; that stretch reads KTAYATIKTN…IESVVFSSSL (147 aa).

It belongs to the cyclophilin-type PPIase family.

The enzyme catalyses [protein]-peptidylproline (omega=180) = [protein]-peptidylproline (omega=0). PPIases accelerate the folding of proteins. It catalyzes the cis-trans isomerization of proline imidic peptide bonds in oligopeptides. The sequence is that of Peptidyl-prolyl cis-trans isomerase (ppiA) from Helicobacter pylori (strain ATCC 700392 / 26695) (Campylobacter pylori).